The chain runs to 86 residues: Weak neurotoxin 5 (86 aa).

A signal peptide spans 1-21; the sequence is MKTLLLTLVVVTIVCLDLGYT. 5 disulfide bridges follow: C24-C45, C27-C32, C38-C63, C67-C78, and C79-C84.

The protein belongs to the three-finger toxin family. Ancestral subfamily. Orphan group II sub-subfamily. In terms of tissue distribution, expressed by the venom gland.

The protein localises to the secreted. Binds with low affinity to muscular and very low affinity to neuronal (alpha-7/CHRNA7) nicotinic acetylcholine receptor (nAChR). The protein is Weak neurotoxin 5 of Naja sputatrix (Malayan spitting cobra).